We begin with the raw amino-acid sequence, 310 residues long: uncharacterized protein (310 aa).

3 disordered regions span residues 1–53, 78–127, and 153–217; these read MSNK…NKEM, PIEN…TITN, and QQPL…SQML. Residues 11–25 show a composition bias toward acidic residues; that stretch reads GEEDEEEDDLYDDYD. 2 stretches are compositionally biased toward polar residues: residues 37 to 49 and 78 to 88; these read STSM…NISL and PIENINENPSP. Low complexity-rich tracts occupy residues 94-126, 164-184, and 192-208; these read QTQQ…TTIT, PSPI…QYIT, and YQPI…QIPT. The stretch at 268–299 forms a coiled coil; sequence DLIKSVQHNIRQYNDDILTLEEKLEQTEWSLQ.

This is an uncharacterized protein from Dictyostelium discoideum (Social amoeba).